Here is a 283-residue protein sequence, read N- to C-terminus: Thymidylate synthase (283 aa).

Arginine 22 contributes to the dUMP binding site. The active-site Nucleophile is cysteine 160. Residues 180–183 (RSCD), asparagine 191, and 221–223 (HIY) each bind dUMP. Aspartate 183 contacts (6R)-5,10-methylene-5,6,7,8-tetrahydrofolate. (6R)-5,10-methylene-5,6,7,8-tetrahydrofolate is bound at residue serine 282.

The protein belongs to the thymidylate synthase family. Bacterial-type ThyA subfamily. Homodimer.

It is found in the cytoplasm. It catalyses the reaction dUMP + (6R)-5,10-methylene-5,6,7,8-tetrahydrofolate = 7,8-dihydrofolate + dTMP. It participates in pyrimidine metabolism; dTTP biosynthesis. Functionally, catalyzes the reductive methylation of 2'-deoxyuridine-5'-monophosphate (dUMP) to 2'-deoxythymidine-5'-monophosphate (dTMP) while utilizing 5,10-methylenetetrahydrofolate (mTHF) as the methyl donor and reductant in the reaction, yielding dihydrofolate (DHF) as a by-product. This enzymatic reaction provides an intracellular de novo source of dTMP, an essential precursor for DNA biosynthesis. This chain is Thymidylate synthase, found in Vibrio parahaemolyticus serotype O3:K6 (strain RIMD 2210633).